Consider the following 303-residue polypeptide: NAD kinase (303 aa).

Catalysis depends on Asp-85, which acts as the Proton acceptor. NAD(+) contacts are provided by residues 85 to 86 (DG), Arg-90, 159 to 160 (ND), Lys-187, Asp-189, Ala-224, and Gln-259.

Belongs to the NAD kinase family. A divalent metal cation is required as a cofactor.

The protein localises to the cytoplasm. It carries out the reaction NAD(+) + ATP = ADP + NADP(+) + H(+). In terms of biological role, involved in the regulation of the intracellular balance of NAD and NADP, and is a key enzyme in the biosynthesis of NADP. Catalyzes specifically the phosphorylation on 2'-hydroxyl of the adenosine moiety of NAD to yield NADP. The chain is NAD kinase from Bdellovibrio bacteriovorus (strain ATCC 15356 / DSM 50701 / NCIMB 9529 / HD100).